The primary structure comprises 766 residues: MSVQSSSGSLEGPPSWSQLSTSPTPGSAAAARSLLNHTPPSGRPREGAMDELHSLDPRRQELLEARFTGVASGSTGSTGSCSVGAKASTNNESSNHSFGSLGSLSDKESETPEKKQSESSRGRKRKAENQNESSQGKSIGGRGHKISDYFEYQGGNGSSPVRGIPPAIRSPQNSHSHSTPSSSVRPNSPSPTALAFGDHPIVQPKQLSFKIIQTDLTMLKLAALESNKIQDLEKKEGRIDDLLRANCDLRRQIDEQQKLLEKYKERLNKCISMSKKLLIEKSTQEKLSSREKSMQDRLRLGHFTTVRHGASFTEQWTDGFAFQNLVKQQEWVNQQREDIERQRKLLAKRKPPTANNSQAPSTNSEPKQRKNKAVNGAENDPFVRPNLPQLLTLAEYHEQEEIFKLRLGHLKKEEAEIQAELERLERVRNLHIRELKRINNEDNSQFKDHPTLNERYLLLHLLGRGGFSEVYKAFDLYEQRYAAVKIHQLNKSWRDEKKENYHKHACREYRIHKELDHPRIVKLYDYFSLDTDTFCTVLEYCEGNDLDFYLKQHKLMSEKEARSIVMQIVNALRYLNEIKPPIIHYDLKPGNILLVDGTACGEIKITDFGLSKIMDDDSYGVDGMDLTSQGAGTYWYLPPECFVVGKEPPKISNKVDVWSVGVIFFQCLYGRKPFGHNQSQQDILQENTILKATEVQFPVKPVVSSEAKAFIRRCLAYRKEDRFDVHQLANDPYLLPHMRRSNSSGNLHMAGLTASPTPPSSSIITY.

Position 1 is an N-acetylmethionine (Met1). Residues 1–19 (MSVQSSSGSLEGPPSWSQL) show a composition bias toward polar residues. The disordered stretch occupies residues 1 to 197 (MSVQSSSGSL…SPSPTALAFG (197 aa)). A compositionally biased stretch (low complexity) spans 20–33 (STSPTPGSAAAARS). The residue at position 38 (Thr38) is a Phosphothreonine. Basic and acidic residues predominate over residues 43–64 (RPREGAMDELHSLDPRRQELLE). Phosphoserine occurs at positions 54, 77, and 80. The span at 68-85 (TGVASGSTGSTGSCSVGA) shows a compositional bias: low complexity. The segment covering 87 to 103 (ASTNNESSNHSFGSLGS) has biased composition (polar residues). Positions 105–121 (SDKESETPEKKQSESSR) are enriched in basic and acidic residues. A phosphoserine mark is found at Ser134, Ser159, Ser174, and Ser176. Positions 170–192 (SPQNSHSHSTPSSSVRPNSPSPT) are enriched in low complexity. Residues 230-281 (QDLEKKEGRIDDLLRANCDLRRQIDEQQKLLEKYKERLNKCISMSKKLLIEK) adopt a coiled-coil conformation. The disordered stretch occupies residues 346–383 (LAKRKPPTANNSQAPSTNSEPKQRKNKAVNGAENDPFV). A compositionally biased stretch (polar residues) spans 353 to 365 (TANNSQAPSTNSE). Residues 397-445 (HEQEEIFKLRLGHLKKEEAEIQAELERLERVRNLHIRELKRINNEDNSQ) are a coiled coil. Residues 456–734 (YLLLHLLGRG…VHQLANDPYL (279 aa)) enclose the Protein kinase domain. Residues 462–470 (LGRGGFSEV) and Lys485 each bind ATP. The active-site Proton acceptor is Asp586. Position 743 is a phosphoserine (Ser743).

This sequence belongs to the protein kinase superfamily. Ser/Thr protein kinase family. Heterodimer with TLK2. Mg(2+) serves as cofactor. In terms of tissue distribution, widely expressed. Present in fetal placenta, liver, kidney and pancreas but not heart or skeletal muscle. Also found in adult cell lines. Isoform 3 is ubiquitously expressed in all tissues examined.

The protein localises to the nucleus. The catalysed reaction is L-seryl-[protein] + ATP = O-phospho-L-seryl-[protein] + ADP + H(+). It carries out the reaction L-threonyl-[protein] + ATP = O-phospho-L-threonyl-[protein] + ADP + H(+). Its activity is regulated as follows. Cell-cycle regulated, maximal activity in S-phase. Inactivated by phosphorylation at Ser-743, potentially by CHEK1. In terms of biological role, rapidly and transiently inhibited by phosphorylation following the generation of DNA double-stranded breaks during S-phase. This is cell cycle checkpoint and ATM-pathway dependent and appears to regulate processes involved in chromatin assembly. Isoform 3 phosphorylates and enhances the stability of the t-SNARE SNAP23, augmenting its assembly with syntaxin. Isoform 3 protects the cells from the ionizing radiation by facilitating the repair of DSBs. In vitro, phosphorylates histone H3 at 'Ser-10'. The sequence is that of Serine/threonine-protein kinase tousled-like 1 (TLK1) from Homo sapiens (Human).